Consider the following 436-residue polypeptide: Putative ankyrin repeat protein FPV245 (436 aa).

ANK repeat units follow at residues 1–30 (MSVD…CINI), 34–63 (ETTT…QVNH), 67–96 (KIPN…DTSI), 98–119 (PVPC…KVNT), 123–152 (KSKT…DVNI), 156–185 (NGCY…YANV), 189–218 (YGNS…NISN), 222–252 (NGVT…DTDV), 253–283 (DGYT…DISI), and 287–317 (NGRN…LINE).

The protein is Putative ankyrin repeat protein FPV245 of Vertebrata (FPV).